Here is a 340-residue protein sequence, read N- to C-terminus: 4-amino-5-hydroxymethyl-2-methylpyrimidine phosphate synthase THI13 (340 aa).

Lys-62 carries the N6-(pyridoxal phosphate)lysine modification. Residue His-66 is part of the active site. 115-118 (GEFG) serves as a coordination point for pyridoxal 5'-phosphate. Positions 195–199 (CCCFC) match the CCCFC; essential for catalytic activity, may be the site of iron coordination motif.

Belongs to the NMT1/THI5 family. Homodimer. Fe cation is required as a cofactor.

The catalysed reaction is N(6)-(pyridoxal phosphate)-L-lysyl-[4-amino-5-hydroxymethyl-2-methylpyrimidine phosphate synthase] + L-histidyl-[4-amino-5-hydroxymethyl-2-methylpyrimidine phosphate synthase] + 2 Fe(3+) + 4 H2O = L-lysyl-[4-amino-5-hydroxymethyl-2-methylpyrimidine phosphate synthase] + (2S)-2-amino-5-hydroxy-4-oxopentanoyl-[4-amino-5-hydroxymethyl-2-methylpyrimidine phosphate synthase] + 4-amino-2-methyl-5-(phosphooxymethyl)pyrimidine + 3-oxopropanoate + 2 Fe(2+) + 2 H(+). It functions in the pathway cofactor biosynthesis; thiamine diphosphate biosynthesis. Responsible for the formation of the pyrimidine heterocycle in the thiamine biosynthesis pathway. Catalyzes the formation of hydroxymethylpyrimidine phosphate (HMP-P) from histidine and pyridoxal phosphate (PLP). The protein uses PLP and the active site histidine to form HMP-P, generating an inactive enzyme. The enzyme can only undergo a single turnover, which suggests it is a suicide enzyme. This is 4-amino-5-hydroxymethyl-2-methylpyrimidine phosphate synthase THI13 from Saccharomyces cerevisiae (strain ATCC 204508 / S288c) (Baker's yeast).